Consider the following 184-residue polypeptide: Protein DESIGUAL 3 (184 aa).

An N-terminal signal peptide occupies residues 1-24; the sequence is MESELGFLVSVVIICADITATVLG. Positions 34-45 are enriched in basic residues; the sequence is APHHHHQQHSRH. The segment at 34-53 is disordered; it reads APHHHHQQHSRHSGSGCRRS. 3 consecutive transmembrane segments (helical) span residues 62-82, 99-119, and 140-160; these read GVAA…LGGC, ILAV…YSTL, and FFLI…AYYV. N180 carries an N-linked (GlcNAc...) asparagine glycan.

The protein belongs to the DESIGUAL family. As to expression, mainly expressed in roots, inflorescences and developing leaves, and, at low levels, in mature leaves.

It is found in the endoplasmic reticulum membrane. Involved, partially redundantly with VCC/DEAL1 and DEAL2, to ensure bilateral symmetry development and early leaf margin patterning, probably via the regulation of auxin and CUC2 distribution. This is Protein DESIGUAL 3 from Arabidopsis thaliana (Mouse-ear cress).